Reading from the N-terminus, the 283-residue chain is 2-hydroxymuconate semialdehyde hydrolase (283 aa).

The 231-residue stretch at 32-262 (LMMIHGSGPG…QCGHWTQIEH (231 aa)) folds into the AB hydrolase-1 domain. Residues S107, D228, and H256 contribute to the active site.

The protein belongs to the DmpD/TodF/XylF esterase family.

It carries out the reaction (2Z,4E)-2-hydroxy-6-oxohexa-2,4-dienoate + H2O = 2-oxopent-4-enoate + formate + H(+). The protein operates within aromatic compound metabolism; benzoate degradation via hydroxylation. In terms of biological role, catalyzes the conversion of 2-hydroxymuconate semialdehyde to 2-hydroxypent-2,4-dienoate. The chain is 2-hydroxymuconate semialdehyde hydrolase (dmpD) from Pseudomonas sp. (strain CF600).